Here is a 240-residue protein sequence, read N- to C-terminus: Vesicle-associated membrane protein 727 (240 aa).

The Cytoplasmic segment spans residues 1–215; that stretch reads MSQKGLIYSF…MWLQSLQMKL (215 aa). The 128-residue stretch at 6 to 133 folds into the Longin domain; it reads LIYSFVAKGT…NLDREFGPIL (128 aa). Positions 149-209 constitute a v-SNARE coiled-coil homology domain; it reads KLSKLKAQIT…RQLRRKMWLQ (61 aa). The chain crosses the membrane as a helical; Anchor for type IV membrane protein span at residues 216 to 236; it reads MVAGAVFSFILIVWVVACGGF. At 237–240 the chain is on the vesicular side; that stretch reads KCSS.

It belongs to the synaptobrevin family. In terms of assembly, interacts with subunits of the class C core vacuole/endosome tethering (CORVET) complex including VPS11, VCL1, VPS18, VPS33, VPS3 and VPS8. Highly expressed in flowers. Detected in leaves, stems and roots.

Its subcellular location is the early endosome membrane. It is found in the endosome membrane. In terms of biological role, involved in the targeting and/or fusion of transport vesicles to their target membrane. This is Vesicle-associated membrane protein 727 (VAMP727) from Arabidopsis thaliana (Mouse-ear cress).